The sequence spans 211 residues: Small ribosomal subunit protein uS3c (211 aa).

One can recognise a KH type-2 domain in the interval 39–109 (IREFAESRLP…NVALYVTKTQ (71 aa)).

It belongs to the universal ribosomal protein uS3 family. Part of the 30S ribosomal subunit.

It localises to the plastid. The protein localises to the chloroplast. This is Small ribosomal subunit protein uS3c (rps3) from Ostreococcus tauri.